We begin with the raw amino-acid sequence, 289 residues long: RNA exonuclease 4 (289 aa).

The segment covering 1 to 24 (MALSSNWQALLASESNPTSNGKNK) has biased composition (polar residues). A disordered region spans residues 1–34 (MALSSNWQALLASESNPTSNGKNKQSNRKIRNVK). Basic residues predominate over residues 25-34 (QSNRKIRNVK). Residues 121 to 273 (YIAMDCEFVG…EDARATMLLY (153 aa)) enclose the Exonuclease domain.

Belongs to the REXO4 family.

It is found in the nucleus. In terms of biological role, exoribonuclease involved in ribosome biosynthesis. Involved in the processing of ITS1, the internal transcribed spacer localized between the 18S and 5.8S rRNAs. The chain is RNA exonuclease 4 (REX4) from Saccharomyces cerevisiae (strain ATCC 204508 / S288c) (Baker's yeast).